Consider the following 343-residue polypeptide: tRNA N6-adenosine threonylcarbamoyltransferase (343 aa).

Histidine 116 and histidine 120 together coordinate Fe cation. Substrate-binding positions include 138-142 (LVSGG), aspartate 171, glycine 184, aspartate 188, and asparagine 277. Aspartate 306 serves as a coordination point for Fe cation.

This sequence belongs to the KAE1 / TsaD family. Fe(2+) serves as cofactor.

The protein resides in the cytoplasm. It catalyses the reaction L-threonylcarbamoyladenylate + adenosine(37) in tRNA = N(6)-L-threonylcarbamoyladenosine(37) in tRNA + AMP + H(+). Its function is as follows. Required for the formation of a threonylcarbamoyl group on adenosine at position 37 (t(6)A37) in tRNAs that read codons beginning with adenine. Is involved in the transfer of the threonylcarbamoyl moiety of threonylcarbamoyl-AMP (TC-AMP) to the N6 group of A37, together with TsaE and TsaB. TsaD likely plays a direct catalytic role in this reaction. This Ligilactobacillus salivarius (strain UCC118) (Lactobacillus salivarius) protein is tRNA N6-adenosine threonylcarbamoyltransferase.